We begin with the raw amino-acid sequence, 72 residues long: Heat-stable enterotoxin A2 (72 aa).

Residues 1-19 (MKKSILFIFLSVLSFSPFA) form the signal peptide. Positions 20–53 (QDAKPAGSSKEKITLESKKCNIVKKNNESSPESM) are excised as a propeptide. 3 cysteine pairs are disulfide-bonded: Cys-59–Cys-64, Cys-60–Cys-68, and Cys-63–Cys-71.

It belongs to the heat-stable enterotoxin family.

Its subcellular location is the secreted. Functionally, toxin which activates the particulate form of guanylate cyclase and increases cyclic GMP levels within the host intestinal epithelial cells. The sequence is that of Heat-stable enterotoxin A2 (sta2) from Escherichia coli.